A 189-amino-acid chain; its full sequence is Movement protein (189 aa).

Belongs to the tombusvirus/aureusvirus movement protein p22 family. Interacts with host protein HFI22. Post-translationally, phosphorylated.

It localises to the host membrane. Its function is as follows. Transports viral genome to neighboring plant cells directly through plasmosdesmata, without any budding. The movement protein allows efficient cell to cell propagation, by bypassing the host cell wall barrier. The sequence is that of Movement protein from Capsicum annuum (Capsicum pepper).